The following is a 398-amino-acid chain: Chalcone synthase 1 (398 aa).

58–65 lines the CoA pocket; the sequence is KFKRMCDK. C167 functions as the Acyl-thioester intermediate in the catalytic mechanism. Substrate contacts are provided by residues T200 and 219-220; that span reads GD. Position 311 (A311) interacts with CoA.

This sequence belongs to the thiolase-like superfamily. Chalcone/stilbene synthases family. In terms of assembly, homodimer.

The enzyme catalyses (E)-4-coumaroyl-CoA + 3 malonyl-CoA + 3 H(+) = 2',4,4',6'-tetrahydroxychalcone + 3 CO2 + 4 CoA. The protein operates within secondary metabolite biosynthesis; flavonoid biosynthesis. The primary product of this enzyme is 4,2',4',6'-tetrahydroxychalcone (also termed naringenin-chalcone or chalcone) which can under specific conditions spontaneously isomerize into naringenin. The chain is Chalcone synthase 1 (CHS1) from Oryza sativa subsp. indica (Rice).